The primary structure comprises 435 residues: MNDTTSKECPSGPSAWSIASQWVDPGAQSAPWWKLIGSQLCLLAQEARYPIEKQFEILLFLYAKVLPRVGPLNKGEKFNSPSRYTSLLTDDGTPFEYSWKWNNSTSSPDIRYCIEAIGSHTGSSTDPYNYLETEKLLTQDLASCVPGLDLTWFHHFVKAFGIDQRQMASNNPDAPKANMFVAFEHVQKGVVVKAYFLPAAEAGSGGPPTFETFASATRGVLNNTAALDASLDFVKNNEMGIDLVPDMLAVDCVDPNKSRLKLYVSTTATSFASIVSVMTLGGKITDVDRGIKELEVLLSFALGKETPISRDDELNVQSVFDKGLAHDFDLYGRMTYYFDIAPSSKLPDVKLYIPVIRFGRSDEAVASGLGQYLRLRQRDQFHDGFMRALGSIGAGHPEGSGHRLQTYLAVAFQRDGSLAITSYINPGVYHDDLKG.

Dimethylallyl diphosphate contacts are provided by R111, K193, Y195, R259, K261, Y263, Y352, and Y423.

Belongs to the tryptophan dimethylallyltransferase family.

It participates in secondary metabolite biosynthesis. DMATS-type prenyltransferase; part of the fragmented gene cluster that mediates the biosynthesis of fusarochromene, a tryptophan-derived metabolite closely related to a group of mycotoxins including fusarochromanone. Within the pathway, fscG catalyzes the prenylation of the primary alcohol produced by fscA which is necessary for the formation of the chromene ring by the oxidoreductase fscI. The first step of the pathway is the epimerization of L-tryptophan to D-tryptophan in the presence of the NRPS-like tryptophan epimerase fscC. D-tryptophan is subsequently hydroxylated by the tryptophan 6-hydroxylase fscE to yield 6-hydroxytryptophan. The pyrrole ring undergoes cleavaged by the tryptophan 2,3-dioxygenase fscD and is finally converted to 4-hydroxykyrunenine by the hydrolase fscH. The NRPS-like oxidoreductase fscA reduces the carboxyl group to primary alcohol and the DMATS-type prenyltransferase fscG performs prenylation, followed by the formation of a chromene ring catalyzed by the oxidoreductase fscI, which leads to desacetylfusarochromene. Epoxidation by fscF and rearrangement reactions of chromene double bonds convert compound desacetylfusarochromene to fusarochromanones. Although specific acetyltransferases were not found near the fsc gene cluster, several predicted enzymes containing the N-acetyltransferase superfamily domain are present in the genome of F.equiseti. These predicted enzymes may have the potential to convert desacetylfusarochromene to fusarochromene. In Fusarium equiseti (Fusarium scirpi), this protein is DMATS-type prenyltransferase fscG.